The following is a 520-amino-acid chain: Nonsense-mediated mRNA decay factor SMG9 (520 aa).

Disordered stretches follow at residues 1–94 (MSES…PAPL) and 107–143 (GKGP…QRPT). Ser-2 is subject to N-acetylserine. Ser-2, Ser-4, Ser-7, Ser-32, and Ser-53 each carry phosphoserine. Residues 36 to 53 (GRERDYIAPWERERRDGS) show a composition bias toward basic and acidic residues. The segment covering 78–94 (QPPPSTAPAAPPAPAPL) has biased composition (pro residues). The segment covering 112-121 (AATGASTPEG) has biased composition (low complexity). Positions 122 to 133 (TAPPPPTAPAPP) are enriched in pro residues. At Ser-451 the chain carries Phosphoserine.

The protein belongs to the SMG9 family. Self-associates to form homodimers and forms heterodimers with SMG8; these assembly forms may represent SMG1C intermediate forms. Component of the SMG1C complex composed of SMG1, SMG8 and SMG9. Interacts with DHX34; the interaction is RNA-independent. Phosphorylated by SMG1.

Its function is as follows. Involved in nonsense-mediated decay (NMD) of mRNAs containing premature stop codons. Is recruited by release factors to stalled ribosomes together with SMG1 and SMG8 (forming the SMG1C protein kinase complex) and, in the SMG1C complex, is required for the efficient association between SMG1 and SMG8. Plays a role in brain, heart, and eye development. The protein is Nonsense-mediated mRNA decay factor SMG9 of Rattus norvegicus (Rat).